A 507-amino-acid chain; its full sequence is Photosystem II CP47 reaction center protein (507 aa).

The Cytoplasmic segment spans residues 2–16 (GLPWYRVHTVVLNDP). Residues 17–39 (GRLISVHLMHTALVAGWAGSMAL) traverse the membrane as a helical segment. The Lumenal, thylakoid segment spans residues 40–94 (YELAIFDSSDAVLNPMWRQGMFVLPFMARLGVTSSWNGWSVTGETGLDPGFWSFE). The helical transmembrane segment at 95-116 (GVAAAHIVLSGLLFLAAVWHWV) threads the bilayer. At 117–134 (FWDLELFVDPRTGESALD) the chain is on the cytoplasmic side. A helical membrane pass occupies residues 135–159 (LPKMFGIHLFLSGLLCFGFGAFHLT). Residues 160-196 (GVWGPGMWVSDPYGLTGHVQPVAPEWGPAGFNPFNPG) are Lumenal, thylakoid-facing. The chain crosses the membrane as a helical span at residues 197-218 (GVVAHHIAAGIVGIIAGLFHLT). Residues 219–233 (VRPPERLYKALRMGN) lie on the Cytoplasmic side of the membrane. Residues 234–255 (IETVLSSSIAAVFFAAFVVAGT) form a helical membrane-spanning segment. Residues 256-450 (MWYGNATTPI…GVFRTSPRGW (195 aa)) are Lumenal, thylakoid-facing. The helical transmembrane segment at 451 to 474 (FTFGHAVFALLFFFGHIWHGSRTL) threads the bilayer. Residues 475–507 (FRDVFAGVDPGLEEQVEFGVFAKVGDLSTRKEA) are Cytoplasmic-facing.

The protein belongs to the PsbB/PsbC family. PsbB subfamily. In terms of assembly, PSII is composed of 1 copy each of membrane proteins PsbA, PsbB, PsbC, PsbD, PsbE, PsbF, PsbH, PsbI, PsbJ, PsbK, PsbL, PsbM, PsbT, PsbX, Psb30/Ycf12, peripheral proteins PsbO, CyanoQ (PsbQ), PsbU, PsbV and a large number of cofactors. It forms dimeric complexes. Contacts PsbQ. Binds multiple chlorophylls. PSII binds additional chlorophylls, carotenoids and specific lipids. serves as cofactor.

The protein resides in the cellular thylakoid membrane. In terms of biological role, one of the components of the core complex of photosystem II (PSII). It binds chlorophyll and helps catalyze the primary light-induced photochemical processes of PSII. PSII is a light-driven water:plastoquinone oxidoreductase, using light energy to abstract electrons from H(2)O, generating O(2) and a proton gradient subsequently used for ATP formation. This chain is Photosystem II CP47 reaction center protein, found in Synechocystis sp. (strain ATCC 27184 / PCC 6803 / Kazusa).